The sequence spans 150 residues: MVLCFPLLLLLLVLWGPVCLLHAWPKHLTRAHWFEIQHIQPSPLQCNRAMSGINNYTQHCKHQNTFLHDSFQNVAAVCDLLSIICKNRQHNCHQSSKPVNMTDCRLTSGKYPQCRYSTAAQYKFFIVACDPPQKSDPPYKLVPVHLDSIL.

A signal peptide spans 1 to 23 (MVLCFPLLLLLLVLWGPVCLLHA). Residue histidine 38 is the Proton acceptor of the active site. 4 cysteine pairs are disulfide-bonded: cysteine 46/cysteine 104, cysteine 60/cysteine 114, cysteine 78/cysteine 129, and cysteine 85/cysteine 92. Residue asparagine 55 is glycosylated (N-linked (GlcNAc...) asparagine). Residues 61–65 (KHQNT) and lysine 86 each bind substrate. An N-linked (GlcNAc...) asparagine glycan is attached at asparagine 100. Arginine 105 serves as a coordination point for substrate. The active-site Proton donor is histidine 145.

Belongs to the pancreatic ribonuclease family. As to quaternary structure, interacts (via N-terminus) with bacterial lipopolysaccharide (LPS).

It is found in the secreted. The protein resides in the lysosome. It localises to the cytoplasmic granule. Functionally, ribonuclease which shows a preference for the pyrimidines uridine and cytosine. Has potent antibacterial activity against a range of Gram-positive and Gram-negative bacteria, including P.aeruginosa, A.baumanii, M.luteus, S.aureus, E.faecalis, E.faecium, S.saprophyticus and E.coli. Causes loss of bacterial membrane integrity, and also promotes agglutination of Gram-negative bacteria. Probably contributes to urinary tract sterility. Bactericidal activity is independent of RNase activity. In Papio hamadryas (Hamadryas baboon), this protein is Ribonuclease K6 (RNASE6).